We begin with the raw amino-acid sequence, 318 residues long: Fe(3+) dicitrate transport system permease protein FecD (318 aa).

Topologically, residues 1–2 (MK) are cytoplasmic. Residues 3–23 (IALVIFITLALAGCALLSLHM) traverse the membrane as a helical segment. The Periplasmic portion of the chain corresponds to 24 to 55 (GVIPVPWRALLTDWQAGHEHYYVLMEYRLPRL). A helical transmembrane segment spans residues 56 to 76 (LLALFVGAALAVAGVLIQGIV). Topologically, residues 77 to 105 (RNPLASPDILGVNHAASLASVGALLLMPS) are cytoplasmic. The chain crosses the membrane as a helical span at residues 106 to 126 (LPVMVLPLLAFAGGMAGLILL). Residues 127 to 137 (KMLAKTHQPMK) are Periplasmic-facing. A helical membrane pass occupies residues 138–158 (LALTGVALSACWASLTDYLML). The Cytoplasmic portion of the chain corresponds to 159–179 (SRPQDVNNALLWLTGSLWGRD). Residues 180-200 (WSFVKIAIPLMILFLPLSLSF) traverse the membrane as a helical segment. At 201-225 (CRDLDLLALGDARATTLGVSVPHTR) the chain is on the periplasmic side. A helical transmembrane segment spans residues 226 to 246 (FWALLLAVAMTSTGVAACGPI). Topologically, residues 247-269 (SFIGLVVPHMMRSITGGRHRRLL) are cytoplasmic. A helical membrane pass occupies residues 270–290 (PVSALTGALLLVVADLLARII). Topologically, residues 291-294 (HPPL) are periplasmic. A helical membrane pass occupies residues 295 to 315 (ELPVGVLTAIIGAPWFVWLLV). Topologically, residues 316-318 (RMR) are cytoplasmic.

Belongs to the binding-protein-dependent transport system permease family. FecCD subfamily. In terms of assembly, the complex is composed of two ATP-binding proteins (FecE), two transmembrane proteins (FecC and FecD) and a solute-binding protein (FecB). Interacts with FecB.

The protein resides in the cell inner membrane. Part of the ABC transporter complex FecBCDE involved in citrate-dependent Fe(3+) uptake. Probably responsible for the translocation of the substrate across the membrane. The protein is Fe(3+) dicitrate transport system permease protein FecD of Escherichia coli (strain K12).